Reading from the N-terminus, the 526-residue chain is pH-sensitive chloride channel 2 (526 aa).

Positions 1–18 are cleaved as a signal peptide; it reads MDTLGIFVLISYLGLSSA. Residues 19-300 are Extracellular-facing; the sequence is AGVHLGDLQQ…VLLTREVGYY (282 aa). Asn33, Asn42, Asn52, Asn192, Asn231, Asn264, Asn271, and Asn283 each carry an N-linked (GlcNAc...) asparagine glycan. Residues 301–321 form a helical membrane-spanning segment; it reads VIDYFLPSIMIVTISWVSFWL. Over 322–327 the chain is Cytoplasmic; it reads QADQTP. The helical transmembrane segment at 328–347 threads the bilayer; that stretch reads ARTTLGCTTLLSFITLSLSQ. The Extracellular portion of the chain corresponds to 348–360; that stretch reads ENNLMKVSYVTMS. The chain crosses the membrane as a helical span at residues 361–381; that stretch reads EVWFLVCTIFIFGSLVEFAFV. Topologically, residues 382 to 505 are cytoplasmic; it reads NTIWRRNNDL…VSLWIDRKMR (124 aa). Residues 463 to 488 form a disordered region; sequence ISLDEQDETSTSESSDSSKEKPAQTF. The chain crosses the membrane as a helical span at residues 506–526; that stretch reads FVFPLSFIVFNALFWTLVYCL.

It belongs to the ligand-gated ion channel (TC 1.A.9) family. As to expression, in third-instar larvae, expressed in the principal cells of the excretory Malpighian tubules (at protein level). Also detected in the enterocytes of the copper cell region and the iron cell region of the larval midgut (at protein level). In the copper cell region expression is confined to the interstitial cells and in the iron cell region it is expressed in the anterior portion (at protein level). Expressed in the Malpighian tubules and the middle midgut of third instar larvae and adults.

It is found in the apical cell membrane. It localises to the cell projection. The protein localises to the microvillus membrane. Its subcellular location is the late endosome membrane. The protein resides in the lysosome membrane. The catalysed reaction is chloride(in) = chloride(out). Functionally, ligand and pH-gated channel that mediates chloride transport primarily in the mid-gut and thereby functions in larval metabolism and fluid homeostasis. Channel opening is triggered by zinc binding or, to a lesser extent, an increase in extracellular pH. Zinc-dependent activity in the mid-gut is required for modulating Tor-dependent metabolic programs that promote larval feeding and systematic growth. It may therefore act as an intestinal zinc sensor that mediates larval growth and metabolism in response to micronutrient availability. Activates Tor signaling via its activity in maintaining lysosome homeostasis in interstitial cells and/or by its role in activating the release of insulin-like peptides in the brain after feeding, via an unknown mechanism. Functions in lysosome homeostasis by regulating chloride transport into enterocyte lysosomes to sustain V-ATPase function which maintains lysosomal acidification and consequently promotes Tor activation at the lysosome membrane. Also appears to play a role in regulating fluid secretion and osmotic homeostasis in Malpighian tubules in response to the pH of extracellular urine. This function is important for proper urine production during diuresis. This is pH-sensitive chloride channel 2 from Drosophila melanogaster (Fruit fly).